Consider the following 956-residue polypeptide: Endogenous retrovirus group K member 6 Pol protein (956 aa).

The Reverse transcriptase domain occupies 57 to 245 (LEKGHIEPSF…TPFHYLGMQI (189 aa)). Residues 161 to 164 (LPQG) carry the LPQG motif. Residues 195–198 (CIDD) carry the YXDD motif. In terms of domain architecture, RNase H type-1 spans 460–590 (LENALTVFTD…ADLLVSSALI (131 aa)). Residues D469, E497, D517, and D582 each coordinate Mg(2+). Residues 587–628 (SALIKAQELHALTHVNAAGLKNKFDVTWKQAKDIVQHCTQCQ) form an Integrase-type zinc finger. Zn(2+) contacts are provided by H596, H600, C624, and C627. In terms of domain architecture, Integrase catalytic spans 642–803 (RGLCPNALWQ…TSAEQHLTGK (162 aa)). The segment at residues 811-859 (KLIWWKDNKNKTWEIGKVITWGRGFACVSPGENQLPVWIPTRHLKFYNE) is a DNA-binding region (integrase-type). The tract at residues 865–890 (KKSTSAETETSQSSTVDSQDEQNGDV) is disordered. Residues 869–879 (SAETETSQSST) show a composition bias toward low complexity.

The protein belongs to the beta type-B retroviral polymerase family. HERV class-II K(HML-2) pol subfamily. In terms of processing, cleavage sites that yield the mature proteins remain to be determined.

It catalyses the reaction DNA(n) + a 2'-deoxyribonucleoside 5'-triphosphate = DNA(n+1) + diphosphate. The catalysed reaction is Endonucleolytic cleavage to 5'-phosphomonoester.. Its function is as follows. Early post-infection, the reverse transcriptase converts the viral RNA genome into double-stranded viral DNA. The RNase H domain of the reverse transcriptase performs two functions. It degrades the RNA template and specifically removes the RNA primer from the RNA/DNA hybrid. Following nuclear import, the integrase catalyzes the insertion of the linear, double-stranded viral DNA into the host cell chromosome. Endogenous Pol proteins may have kept, lost or modified their original function during evolution. The chain is Endogenous retrovirus group K member 6 Pol protein (ERVK-6) from Homo sapiens (Human).